The primary structure comprises 571 residues: Ferroportin (571 aa).

The Cytoplasmic segment spans residues 1–23 (MTRAGDHNRQRGCCGSLADYLTS). The helical transmembrane segment at 24–53 (AKFLLYLGHSLSTWGDRMWHFAVSVFLVEL) threads the bilayer. Positions 39 and 43 each coordinate Fe cation. The Extracellular portion of the chain corresponds to 54 to 57 (YGNS). Residues 58–84 (LLLTAVYGLVVAGSVLVLGAIIGDWVD) traverse the membrane as a helical segment. Topologically, residues 85-87 (KNA) are cytoplasmic. The chain crosses the membrane as a helical span at residues 88–118 (RLKVAQTSLVVQNVSVILCGIILMMVFLHKH). At 119 to 126 (ELLTMYHG) the chain is on the extracellular side. Residues 127–162 (WVLTSCYILIITIANIANLASTATAITIQRDWIVVV) form a helical membrane-spanning segment. Residues 163 to 164 (AG) are Cytoplasmic-facing. Residues 165–195 (EDRSKLANMNATIRRIDQLTNILAPMAVGQI) traverse the membrane as a helical segment. The Extracellular portion of the chain corresponds to 196-202 (MTFGSPV). The chain crosses the membrane as a helical span at residues 203-229 (IGCGFISGWNLVSMCVEYVLLWKVYQK). The Cytoplasmic segment spans residues 230-306 (TPALAVKAGL…DGWVSYYNQP (77 aa)). Residues 307 to 333 (VFLAGMGLAFLYMTVLGFDCITTGYAY) form a helical membrane-spanning segment. Residue C326 participates in Fe cation binding. The Extracellular portion of the chain corresponds to 334-338 (TQGLS). A helical transmembrane segment spans residues 339 to 366 (GSILSILMGASAITGIMGTVAFTWLRRK). Over 367–368 (CG) the chain is Cytoplasmic. The chain crosses the membrane as a helical span at residues 369–391 (LVRTGLISGLAQLSCLILCVISV). The Extracellular segment spans residues 392 to 453 (FMPGSPLDLS…ETSPESVPII (62 aa)). N-linked (GlcNAc...) asparagine glycosylation is present at N434. The helical transmembrane segment at 454–483 (SVSLLFAGVIAARIGLWSFDLTVTQLLQEN) threads the bilayer. Topologically, residues 484–488 (VIESE) are cytoplasmic. Residues 489–513 (RGIINGVQNSMNYLLDLLHFIMVIL) form a helical membrane-spanning segment. H507 provides a ligand contact to Fe cation. Residues 514–516 (APN) are Extracellular-facing. The helical transmembrane segment at 517–542 (PEAFGLLVLISVSFVAMGHIMYFRFA) threads the bilayer. The Cytoplasmic segment spans residues 543 to 571 (QNTLGNKLFACGPDAKEVRKENQANTSVV).

It belongs to the ferroportin (FP) (TC 2.A.100) family. SLC40A subfamily. As to quaternary structure, identified in a complex with STOM. Interacts with HAMP; affinity of the peptide hormone HAMP for SLC40A1 increases by 80-fold in the presence of iron and the interaction promotes SLC40A1 ubiquitination and degradation. Part of a complex composed of SLC40A1/ferroportin, TF/transferrin and HEPH/hephaestin that transfers iron from cells to transferrin. Post-translationally, polyubiquitinated by RNF217; leading to proteasomal degradation. Under conditions of high systemic iron levels, both the hormone peptide hepcidin/HAMP and holo(iron bound)-transferrin/TF induce the ubiquitination, internalization and proteasomal degradation of SLC40A1 to control iron release from cells. In terms of tissue distribution, detected in erythrocytes (at protein level). Expressed in placenta, intestine, muscle and spleen. Highly expressed in mature red blood.

The protein localises to the cell membrane. It is found in the basolateral cell membrane. It carries out the reaction Fe(2+)(in) = Fe(2+)(out). Its function is as follows. Transports Fe(2+) from the inside of a cell to the outside of the cell, playing a key role for maintaining systemic iron homeostasis. Transports iron from intestinal, splenic, hepatic cells, macrophages and erythrocytes into the blood to provide iron to other tissues. Controls therefore dietary iron uptake, iron recycling by macrophages and erythrocytes, and release of iron stores in hepatocytes. When iron is in excess in serum, circulating HAMP/hepcidin levels increase resulting in a degradation of SLC40A1, thus limiting the iron efflux to plasma. This Homo sapiens (Human) protein is Ferroportin.